The chain runs to 141 residues: Large ribosomal subunit protein uL11 (141 aa).

The protein belongs to the universal ribosomal protein uL11 family. In terms of assembly, part of the ribosomal stalk of the 50S ribosomal subunit. Interacts with L10 and the large rRNA to form the base of the stalk. L10 forms an elongated spine to which L12 dimers bind in a sequential fashion forming a multimeric L10(L12)X complex. One or more lysine residues are methylated.

Its function is as follows. Forms part of the ribosomal stalk which helps the ribosome interact with GTP-bound translation factors. This chain is Large ribosomal subunit protein uL11, found in Amoebophilus asiaticus (strain 5a2).